The chain runs to 581 residues: MNIENYLSETLAKVFQKLGYAESFAKVVTSTREDVGHFQCNGAMPLAKFAKKPPLAIAEEIVEHIDAEDIFAKLEVAKPGFINITLAPKFLADTTNRFLNSNKFGVQNNLPNRKVVLDFGGPNVAKPMHVGHIRSALLGDALQRIHRFCGDTVVSDVHLGDWGTQMGMLIEEIKLQSPQLVYFDENYTGEYPTESPVTVQELAEIYPRASKRCKSDINEMEKARLATFELQQGRRGYVALWQHFVRISIDAVKKDFDSLDVHFDLWLGESDANKFIDEMISYFQANNFIYEDEGAWVIDTNKDGVPPLIVIKKDGGVMYGTTDLATLWQRSKDLDPDEIIYVVDKRQSLHFKQVFSVAERTKVVSEKCKLKHVAFGTVNGKDGRPFKTREGGVMHLADLISQAKEYAKNRMPDENDDSIIDQIAMATIKFGDLINNYANDYFFDLEKFAQHEGKTGPYLLYTVVRAKSILRKIFGDNYDIKSLAKDYKVVNAHNEYEEKLQLQLIQFPIAVQRAYENSQPHHICEYAYSLANSFNKFYVNCPINNLDDESLKKARIALCMATVKAMTIASDLIGISIPERM.

The short motif at 122–132 is the 'HIGH' region element; sequence PNVAKPMHVGH.

Belongs to the class-I aminoacyl-tRNA synthetase family. As to quaternary structure, monomer.

The protein resides in the cytoplasm. It carries out the reaction tRNA(Arg) + L-arginine + ATP = L-arginyl-tRNA(Arg) + AMP + diphosphate. This Francisella tularensis subsp. tularensis (strain WY96-3418) protein is Arginine--tRNA ligase.